Here is a 98-residue protein sequence, read N- to C-terminus: Homeobox protein SMOX-4 (98 aa).

The segment at residues 37-96 (SFRNRTAFTDYQLICLEREFSHIQYLSRIDRIHLAQNLNLTEKQVKIWFQNRRVRWRKRN) is a DNA-binding region (homeobox).

The protein resides in the nucleus. This Schistosoma mansoni (Blood fluke) protein is Homeobox protein SMOX-4 (SMOX-4).